The primary structure comprises 225 residues: MTKFSLHKEGLLTIGFTLACTAVAFFFVPALGLCGICVAALVTYFFRDPQRAIAISKDFVLSPADGLICKIENALPPQSSELVEEMQKISVYLSPLNVHVNRIPVDGIVRKLHYVPGKNLRADYDSSEDENERQESTIEMADGRNVVVVQQTGFLARRVVCDLRKDQQVSAGKRFGIIKFGSRVTVYIPKDMPLLVSEGQTVVAGETILALLSETASLVTERFLD.

Catalysis depends on Ser182, which acts as the Schiff-base intermediate with substrate; via pyruvic acid. Ser182 is subject to Pyruvic acid (Ser); by autocatalysis.

It belongs to the phosphatidylserine decarboxylase family. PSD-A subfamily. Heterodimer of a large membrane-associated beta subunit and a small pyruvoyl-containing alpha subunit. Requires pyruvate as cofactor. In terms of processing, is synthesized initially as an inactive proenzyme. Formation of the active enzyme involves a self-maturation process in which the active site pyruvoyl group is generated from an internal serine residue via an autocatalytic post-translational modification. Two non-identical subunits are generated from the proenzyme in this reaction, and the pyruvate is formed at the N-terminus of the alpha chain, which is derived from the carboxyl end of the proenzyme. The post-translation cleavage follows an unusual pathway, termed non-hydrolytic serinolysis, in which the side chain hydroxyl group of the serine supplies its oxygen atom to form the C-terminus of the beta chain, while the remainder of the serine residue undergoes an oxidative deamination to produce ammonia and the pyruvoyl prosthetic group on the alpha chain.

Its subcellular location is the cell membrane. The catalysed reaction is a 1,2-diacyl-sn-glycero-3-phospho-L-serine + H(+) = a 1,2-diacyl-sn-glycero-3-phosphoethanolamine + CO2. Its pathway is phospholipid metabolism; phosphatidylethanolamine biosynthesis; phosphatidylethanolamine from CDP-diacylglycerol: step 2/2. In terms of biological role, catalyzes the formation of phosphatidylethanolamine (PtdEtn) from phosphatidylserine (PtdSer). The sequence is that of Phosphatidylserine decarboxylase proenzyme from Neorickettsia sennetsu (strain ATCC VR-367 / Miyayama) (Ehrlichia sennetsu).